A 95-amino-acid polypeptide reads, in one-letter code: Protein YY1 (95 aa).

The signal sequence occupies residues 1–26; sequence MAVTRTALLVVLVAGAMTMTMRGAEA. Disulfide bonds link Cys31/Cys72, Cys41/Cys61, Cys62/Cys87, and Cys74/Cys94.

The protein belongs to the A9/FIL1 family. As to expression, anther.

It localises to the secreted. This Oryza sativa subsp. japonica (Rice) protein is Protein YY1.